A 73-amino-acid polypeptide reads, in one-letter code: Mu-conotoxin SIIIA (73 aa).

The signal sequence occupies residues 1–20; the sequence is MMSKLGVLLTVCPLLFPLTA. Residues 20 to 40 form a disordered region; the sequence is ALPPDGDQPADRPAERMQDDI. Positions 21 to 49 are excised as a propeptide; the sequence is LPPDGDQPADRPAERMQDDISSDEHPLFD. A compositionally biased stretch (basic and acidic residues) spans 28 to 40; that stretch reads PADRPAERMQDDI. Gln52 carries the post-translational modification Pyrrolidone carboxylic acid. 3 disulfide bridges follow: Cys54/Cys64, Cys55/Cys70, and Cys59/Cys71. Cys71 bears the Cysteine amide mark.

It belongs to the conotoxin M superfamily. As to expression, expressed by the venom duct.

The protein localises to the secreted. In terms of biological role, mu-conotoxins block voltage-gated sodium channels (Nav). This toxin moderately blocks rNav1.1/SCN1A, rNav1.2/SCN2A, rNav1.3/SCN3A, rNav1.4/SCN4A, and mNav1.6/SCN8A. This chain is Mu-conotoxin SIIIA, found in Conus striatus (Striated cone).